We begin with the raw amino-acid sequence, 330 residues long: Phosphate acyltransferase (330 aa).

It belongs to the PlsX family. As to quaternary structure, homodimer. Probably interacts with PlsY.

It is found in the cytoplasm. It carries out the reaction a fatty acyl-[ACP] + phosphate = an acyl phosphate + holo-[ACP]. It participates in lipid metabolism; phospholipid metabolism. Catalyzes the reversible formation of acyl-phosphate (acyl-PO(4)) from acyl-[acyl-carrier-protein] (acyl-ACP). This enzyme utilizes acyl-ACP as fatty acyl donor, but not acyl-CoA. The polypeptide is Phosphate acyltransferase (Lysinibacillus sphaericus (strain C3-41)).